We begin with the raw amino-acid sequence, 81 residues long: Conotoxin Vc6.13 (81 aa).

The N-terminal stretch at 1-19 (MEKLTILLLVAAVLMSIQA) is a signal peptide. Positions 20–44 (LNQEQHQRAKINLLSKRKAPAERWW) are excised as a propeptide. 3 disulfide bridges follow: Cys-49/Cys-63, Cys-56/Cys-67, and Cys-62/Cys-72.

Belongs to the conotoxin O2 superfamily. Expressed by the venom duct.

The protein resides in the secreted. In terms of biological role, inhibits voltage-gated ion channels. The chain is Conotoxin Vc6.13 from Conus victoriae (Queen Victoria cone).